The primary structure comprises 201 residues: Small ribosomal subunit protein uS4 (201 aa).

Residues Thr-91–Glu-155 enclose the S4 RNA-binding domain.

Belongs to the universal ribosomal protein uS4 family. Part of the 30S ribosomal subunit. Contacts protein S5. The interaction surface between S4 and S5 is involved in control of translational fidelity.

Functionally, one of the primary rRNA binding proteins, it binds directly to 16S rRNA where it nucleates assembly of the body of the 30S subunit. In terms of biological role, with S5 and S12 plays an important role in translational accuracy. This is Small ribosomal subunit protein uS4 from Nocardia farcinica (strain IFM 10152).